A 565-amino-acid chain; its full sequence is Atlastin-2 (565 aa).

The Cytoplasmic portion of the chain corresponds to 1–458; that stretch reads MVLKKGVKFF…NIFYAARTPA (458 aa). The GB1/RHD3-type G domain maps to 73–318; sequence DLNIVVVSVA…LVPLLLAPEN (246 aa). 9 residues coordinate GDP: Arg86, Lys87, Gly88, Lys89, Ser90, Phe91, Gln157, Arg226, and Asp227. GTP-binding residues include Arg86, Lys87, Gly88, Lys89, Ser90, and Phe91. Ser90 is a binding site for Mg(2+). Residues Arg226 and Asp227 each coordinate GTP. The stretch at 238–266 forms a coiled coil; that stretch reads LEGGKQFLEKRLQVKKNQHEELQNVRKHI. Lys252 is subject to N6-methyllysine. 2 residues coordinate GDP: Val285 and Asn288. A GTP-binding site is contributed by Val285. Positions 356 to 447 are 3HB (three-helix bundle) domain; it reads MLQATAEANN…YANFIKHNDG (92 aa). The linker stretch occupies residues 448–456; sequence KNIFYAART. Residues 459–479 traverse the membrane as a helical segment; that stretch reads TLFAVMFAMYIISGLTGFIGL. Residues 480–481 are Lumenal-facing; that stretch reads NS. The chain crosses the membrane as a helical span at residues 482–502; sequence IAVLCNLVMGLALTFLCTWAY. The Cytoplasmic portion of the chain corresponds to 503-565; sequence VKYSGEFREI…VSHHARLKTD (63 aa). The autoinhibitory domain stretch occupies residues 529–565; sequence KPLGDNLMEENIRQSVTNSIKAGLTDQVSHHARLKTD.

The protein belongs to the TRAFAC class dynamin-like GTPase superfamily. GB1/RHD3 GTPase family. GB1 subfamily. In terms of assembly, monomeric and homodimeric. The homodimer, transiently formed by two molecules on opposing membranes, is the active form mediating ER membrane fusion. Interacts with REEP5 and RTN3; these proteins are involved in endoplasmic reticulum tubular network organization. Interacts with ZFYVE27; both proteins are involved in endoplasmic reticulum tubular network organization.

The protein resides in the endoplasmic reticulum membrane. The enzyme catalyses GTP + H2O = GDP + phosphate + H(+). Its function is as follows. Atlastin-2 (ATL2) is a membrane-anchored GTPase that mediates the GTP-dependent fusion of endoplasmic reticulum (ER) membranes, maintaining the continuous ER network. It facilitates the formation of three-way junctions where ER tubules intersect. Two atlastin-2 on neighboring ER tubules bind GTP and form loose homodimers through the GB1/RHD3-type G domains and 3HB regions. Upon GTP hydrolysis, the 3HB regions tighten, pulling the membranes together to drive their fusion. After fusion, the homodimer disassembles upon release of inorganic phosphate (Pi). Subsequently, GDP dissociates, resetting the monomers to a conformation ready for a new fusion cycle. This chain is Atlastin-2, found in Macaca fascicularis (Crab-eating macaque).